A 609-amino-acid chain; its full sequence is MFPERLDAPQAYDIAKAMMDGFNRHYRLFRAESARAKHRFETADWHGQQRAQRERIEFYDLRVRECVRRLDKEFNAGALPMDVWHQIKLHYIGLMVNHLQPELAETFFNSVTTKILHRTHFHNDFIFVRPAVSTEYIESDDPGARPTYRAYYPSRDNLHETVVRIVEHCALQRDFENLPRDAGHVVQALQQRLGAVKLRTNFQVQVLSSLFFRNKGAYLVGKVINGYNELPFALPILHGEDGRLLIDAVLFGENDLQMLFSFARAYFMVDMEIPSAYVQFLRSLMPRKPRAELYTALGLAKQGKTLFYRDFLHHLRYSTDKFRIAPGIKGMVMLVFDLPSFPYVFKLIKDQFPAPKDTTREQVQGKYLLVKQHDRVGRMADTLEYSLVAFPRERFSDELIEEIRRHAPSQIEISDRDGDGRQEVIIAHLYIERRMIPLNIHLQECFDTGLDKPEARSALEHAVTEYGNAIKDMVAANIFPGDMLWKNFGITRNGKVVFYDYDEIEYLTDCNFRRVPPPRCEEDEVSGEVWWPVGPHDVFPETFGPFLLGNDSVREAFMRHHADLLDVEFWQSHKERIQAGHLYDVFPYDSARRFRCASPSSFQTQGDST.

Residues 325 to 331 and Lys-346 each bind ATP; that span reads APGIKGM. Residue Asp-381 is part of the active site.

The protein belongs to the AceK family.

The protein localises to the cytoplasm. The enzyme catalyses L-seryl-[isocitrate dehydrogenase] + ATP = O-phospho-L-seryl-[isocitrate dehydrogenase] + ADP + H(+). Functionally, bifunctional enzyme which can phosphorylate or dephosphorylate isocitrate dehydrogenase (IDH) on a specific serine residue. This is a regulatory mechanism which enables bacteria to bypass the Krebs cycle via the glyoxylate shunt in response to the source of carbon. When bacteria are grown on glucose, IDH is fully active and unphosphorylated, but when grown on acetate or ethanol, the activity of IDH declines drastically concomitant with its phosphorylation. This Acidovorax sp. (strain JS42) protein is Isocitrate dehydrogenase kinase/phosphatase.